Consider the following 89-residue polypeptide: Putative regulatory protein CLH_1161 (89 aa).

It belongs to the RemA family.

In Clostridium botulinum (strain Alaska E43 / Type E3), this protein is Putative regulatory protein CLH_1161.